Here is a 566-residue protein sequence, read N- to C-terminus: Glutamate--tRNA ligase (566 aa).

The 'HIGH' region signature appears at 104 to 114 (PNPDGPLHLGN).

This sequence belongs to the class-I aminoacyl-tRNA synthetase family. Glutamate--tRNA ligase type 2 subfamily.

It is found in the cytoplasm. It carries out the reaction tRNA(Glu) + L-glutamate + ATP = L-glutamyl-tRNA(Glu) + AMP + diphosphate. Catalyzes the attachment of glutamate to tRNA(Glu) in a two-step reaction: glutamate is first activated by ATP to form Glu-AMP and then transferred to the acceptor end of tRNA(Glu). This chain is Glutamate--tRNA ligase, found in Metallosphaera sedula (strain ATCC 51363 / DSM 5348 / JCM 9185 / NBRC 15509 / TH2).